Here is a 238-residue protein sequence, read N- to C-terminus: MTTSPVKVLIHGASGRMGKALLRLAAEDDALHVVGAVVGRSPSQRVVDGVPYFAANELGGAPAFDVAIDFSLPQGFAPILALCVQRGKPLVSGTTGLDEAQRAGLLQAAGQIPLVWASNFSLGVAVLTELVERAAGSLPGWDCDIIEAHHVHKQDAPSGTALTLGEAATGSGAQPRFASVRAGDIVGEHSVQFTGLGERVELIHRATNRDIFARGALHAAKRLLGKPPGSYRVRDLVL.

An NAD(+)-binding site is contributed by G12 to M17. Residue R40 participates in NADP(+) binding. Residues G93–T95 and A117–F120 each bind NAD(+). H149 acts as the Proton donor/acceptor in catalysis. H150 contributes to the (S)-2,3,4,5-tetrahydrodipicolinate binding site. K153 functions as the Proton donor in the catalytic mechanism. Residue G159–T160 participates in (S)-2,3,4,5-tetrahydrodipicolinate binding.

It belongs to the DapB family.

Its subcellular location is the cytoplasm. It catalyses the reaction (S)-2,3,4,5-tetrahydrodipicolinate + NAD(+) + H2O = (2S,4S)-4-hydroxy-2,3,4,5-tetrahydrodipicolinate + NADH + H(+). The catalysed reaction is (S)-2,3,4,5-tetrahydrodipicolinate + NADP(+) + H2O = (2S,4S)-4-hydroxy-2,3,4,5-tetrahydrodipicolinate + NADPH + H(+). The protein operates within amino-acid biosynthesis; L-lysine biosynthesis via DAP pathway; (S)-tetrahydrodipicolinate from L-aspartate: step 4/4. Catalyzes the conversion of 4-hydroxy-tetrahydrodipicolinate (HTPA) to tetrahydrodipicolinate. This is 4-hydroxy-tetrahydrodipicolinate reductase from Xanthomonas campestris pv. campestris (strain 8004).